A 104-amino-acid chain; its full sequence is NADH-quinone oxidoreductase subunit K (104 aa).

3 consecutive transmembrane segments (helical) span residues V4–A24, V31–F51, and L67–L87.

Belongs to the complex I subunit 4L family. In terms of assembly, NDH-1 is composed of 14 different subunits. Subunits NuoA, H, J, K, L, M, N constitute the membrane sector of the complex.

It is found in the cell membrane. The catalysed reaction is a quinone + NADH + 5 H(+)(in) = a quinol + NAD(+) + 4 H(+)(out). NDH-1 shuttles electrons from NADH, via FMN and iron-sulfur (Fe-S) centers, to quinones in the respiratory chain. The immediate electron acceptor for the enzyme in this species is believed to be a menaquinone. Couples the redox reaction to proton translocation (for every two electrons transferred, four hydrogen ions are translocated across the cytoplasmic membrane), and thus conserves the redox energy in a proton gradient. The protein is NADH-quinone oxidoreductase subunit K of Bacillus cereus (strain AH187).